Here is a 112-residue protein sequence, read N- to C-terminus: ATP synthase subunit c (112 aa).

2 helical membrane-spanning segments follow: residues 36 to 56 and 81 to 101; these read FSVL…AIGM and MFIA…IALI.

This sequence belongs to the ATPase C chain family. In terms of assembly, F-type ATPases have 2 components, F(1) - the catalytic core - and F(0) - the membrane proton channel. F(1) has five subunits: alpha(3), beta(3), gamma(1), delta(1), epsilon(1). F(0) has three main subunits: a(1), b(2) and c(10-14). The alpha and beta chains form an alternating ring which encloses part of the gamma chain. F(1) is attached to F(0) by a central stalk formed by the gamma and epsilon chains, while a peripheral stalk is formed by the delta and b chains.

It localises to the cell inner membrane. In terms of biological role, f(1)F(0) ATP synthase produces ATP from ADP in the presence of a proton or sodium gradient. F-type ATPases consist of two structural domains, F(1) containing the extramembraneous catalytic core and F(0) containing the membrane proton channel, linked together by a central stalk and a peripheral stalk. During catalysis, ATP synthesis in the catalytic domain of F(1) is coupled via a rotary mechanism of the central stalk subunits to proton translocation. The polypeptide is ATP synthase subunit c (Campylobacter jejuni subsp. jejuni serotype O:2 (strain ATCC 700819 / NCTC 11168)).